A 345-amino-acid chain; its full sequence is Glycerol-3-phosphate dehydrogenase [NAD(P)+] (345 aa).

4 residues coordinate NADPH: Ser23, Tyr24, His44, and Lys118. Residues Lys118, Gly147, and Thr149 each contribute to the sn-glycerol 3-phosphate site. Residue Ala151 participates in NADPH binding. The sn-glycerol 3-phosphate site is built by Lys203, Asp256, Ser266, Arg267, and Asn268. The active-site Proton acceptor is Lys203. Arg267 lines the NADPH pocket. The NADPH site is built by Val291 and Glu293.

Belongs to the NAD-dependent glycerol-3-phosphate dehydrogenase family.

The protein resides in the cytoplasm. The enzyme catalyses sn-glycerol 3-phosphate + NAD(+) = dihydroxyacetone phosphate + NADH + H(+). It carries out the reaction sn-glycerol 3-phosphate + NADP(+) = dihydroxyacetone phosphate + NADPH + H(+). It participates in membrane lipid metabolism; glycerophospholipid metabolism. Functionally, catalyzes the reduction of the glycolytic intermediate dihydroxyacetone phosphate (DHAP) to sn-glycerol 3-phosphate (G3P), the key precursor for phospholipid synthesis. The protein is Glycerol-3-phosphate dehydrogenase [NAD(P)+] of Vibrio vulnificus (strain CMCP6).